The primary structure comprises 462 residues: Hemopexin (462 aa).

Positions 1–23 are cleaved as a signal peptide; the sequence is MARVLGAPVALGLWSLCWSLAIA. 2 O-linked (GalNAc...) threonine glycosylation sites follow: Thr-24 and Thr-29. Positions 29-48 are disordered; the sequence is TSAHGNVAEGETKPDPDVTE. The O-glycosylated at one site stretch occupies residues 30-40; that stretch reads SAHGNVAEGET. Residues 38–48 are compositionally biased toward basic and acidic residues; the sequence is GETKPDPDVTE. Disulfide bonds link Cys-50-Cys-231, Cys-149-Cys-154, and Cys-188-Cys-200. 4 Hemopexin repeats span residues 53 to 93, 94 to 139, 140 to 184, and 185 to 231; these read GWSF…WKNF, PSPV…FPGI, PSPL…SWPA, and VGNC…FMPC. N-linked (GlcNAc...) (complex) asparagine glycosylation is present at Asn-64. His-79 serves as a coordination point for heme. His-150 contacts heme. Residue Asn-187 is glycosylated (N-linked (GlcNAc...) (complex) asparagine). His-236 is a binding site for heme. Residues Asn-240 and Asn-246 are each glycosylated (N-linked (GlcNAc...) asparagine). 3 disulfide bridges follow: Cys-257–Cys-460, Cys-366–Cys-408, and Cys-418–Cys-435. Hemopexin repeat units follow at residues 259–304, 305–352, 357–396, and 400–450; these read PHLV…WPQG, PSAV…VGTP, LDSVDAAFICPGSSRLHIMAGRRLWWLDLKSGAQATWTEL, and HEKV…ALPQ. A heme-binding site is contributed by His-293. N-linked (GlcNAc...) (complex) asparagine glycosylation occurs at Asn-453.

Belongs to the hemopexin family. As to quaternary structure, interacts with FLVCR1. (Microbial infection) Interacts with hepatitis E virus/HEV protein ORF3. N- and O-glycosylated. O-glycosylated with core 1 or possibly core 8 glycans. O-glycosylation in the 30-40 region is minor compared to glycosylation at Thr-24 and Thr-29. As to expression, expressed by the liver and secreted in plasma.

It is found in the secreted. Its function is as follows. Binds heme and transports it to the liver for breakdown and iron recovery, after which the free hemopexin returns to the circulation. The protein is Hemopexin (HPX) of Homo sapiens (Human).